Consider the following 933-residue polypeptide: Probable Rho-type GTPase-activating protein 4 (933 aa).

2 consecutive LIM zinc-binding domains span residues 22-80 (CFCI…LCVD) and 81-129 (ICNG…CLPC). Disordered stretches follow at residues 181-200 (PSSV…NSLR) and 304-338 (ENGT…STTT). Residues 325-338 (RSSTMNYKSVSTTT) are compositionally biased toward polar residues. Ser353 is subject to Phosphoserine. Disordered regions lie at residues 415 to 435 (RLSS…NYEA), 605 to 628 (SSSF…SPRE), and 641 to 660 (GFRP…KRNS). Residues 619-628 (RTISTPSPRE) are compositionally biased toward polar residues. Ser625 is subject to Phosphoserine. The span at 643–652 (RPKDNKDKES) shows a compositional bias: basic and acidic residues. Ser738 and Ser740 each carry phosphoserine. The Rho-GAP domain occupies 753 to 932 (NRLTLLRVPT…FLIDHVHEVF (180 aa)).

Its function is as follows. GTPase-activating protein for Rho-type proteins. This Schizosaccharomyces pombe (strain 972 / ATCC 24843) (Fission yeast) protein is Probable Rho-type GTPase-activating protein 4 (rga4).